Consider the following 254-residue polypeptide: Alcohol dehydrogenase (254 aa).

Residue 10-33 (FVAGLGGIGLDTSREIVKSGPKNL) coordinates NAD(+). Residue Ser138 participates in substrate binding. Residue Tyr151 is the Proton acceptor of the active site.

Belongs to the short-chain dehydrogenases/reductases (SDR) family. Homodimer.

It carries out the reaction a primary alcohol + NAD(+) = an aldehyde + NADH + H(+). The catalysed reaction is a secondary alcohol + NAD(+) = a ketone + NADH + H(+). The chain is Alcohol dehydrogenase (Adh) from Drosophila flavomontana (Fruit fly).